Consider the following 208-residue polypeptide: MSDREQRDGGRSAENNNDRKGRNNGRRNDRRNHQDNERDKYIERVVTINRVAKTVKGGRNMSFTALVVVGDGQGMVGVGYGKAKEVPAAIQKGAEEARKNFFRVPMIAGTITHPVEGRDAAGIVMMKPAAPGTGVIAGGAARPVLECAGVQDILSKSLGSDNALNVVRATVDGLKQLVRPEEVAARRGKSLEEVAPAQMLRKRAGQEA.

Residues 1–21 show a composition bias toward basic and acidic residues; the sequence is MSDREQRDGGRSAENNNDRKG. Residues 1 to 38 form a disordered region; the sequence is MSDREQRDGGRSAENNNDRKGRNNGRRNDRRNHQDNER. An S5 DRBM domain is found at 41–104; it reads YIERVVTINR…EEARKNFFRV (64 aa).

It belongs to the universal ribosomal protein uS5 family. As to quaternary structure, part of the 30S ribosomal subunit. Contacts proteins S4 and S8.

Functionally, with S4 and S12 plays an important role in translational accuracy. Located at the back of the 30S subunit body where it stabilizes the conformation of the head with respect to the body. This is Small ribosomal subunit protein uS5 from Corynebacterium aurimucosum (strain ATCC 700975 / DSM 44827 / CIP 107346 / CN-1) (Corynebacterium nigricans).